The following is a 265-amino-acid chain: Undecaprenyl-diphosphatase (265 aa).

7 helical membrane passes run 38–58 (RSDFFNIVIQAGAILAICLAL), 75–95 (RDYVLKVGVAFLVTAVVGLIV), 108–128 (PVAWALLIGGVWMLVAEHFAG), 135–155 (VVTWKVAIAVGLAQVVAGVFP), 181–201 (FVFMVGIPTMFAASGYALLEM), 215–235 (VAVAFVAATITGFVVVKWLLG), and 244–264 (VFAVYRMLLGAALLLWLPAAA).

This sequence belongs to the UppP family.

It is found in the cell inner membrane. The catalysed reaction is di-trans,octa-cis-undecaprenyl diphosphate + H2O = di-trans,octa-cis-undecaprenyl phosphate + phosphate + H(+). Its function is as follows. Catalyzes the dephosphorylation of undecaprenyl diphosphate (UPP). Confers resistance to bacitracin. The protein is Undecaprenyl-diphosphatase of Xanthomonas euvesicatoria pv. vesicatoria (strain 85-10) (Xanthomonas campestris pv. vesicatoria).